The following is a 123-amino-acid chain: Small ribosomal subunit protein uS13 (123 aa).

Positions 103–123 are disordered; sequence TRTNARTRKGPKKTVGVRRKK. The span at 105-123 shows a compositional bias: basic residues; it reads TNARTRKGPKKTVGVRRKK.

Belongs to the universal ribosomal protein uS13 family. As to quaternary structure, part of the 30S ribosomal subunit. Forms a loose heterodimer with protein S19. Forms two bridges to the 50S subunit in the 70S ribosome.

In terms of biological role, located at the top of the head of the 30S subunit, it contacts several helices of the 16S rRNA. In the 70S ribosome it contacts the 23S rRNA (bridge B1a) and protein L5 of the 50S subunit (bridge B1b), connecting the 2 subunits; these bridges are implicated in subunit movement. Contacts the tRNAs in the A and P-sites. This chain is Small ribosomal subunit protein uS13, found in Desulforudis audaxviator (strain MP104C).